Consider the following 108-residue polypeptide: UPF0060 membrane protein YE2027 (108 aa).

A run of 4 helical transmembrane segments spans residues 6–26 (LLFFVTALAEIIGCFLPYLWL), 29–49 (GASMWLLLPAAASLALFVWLL), 59–79 (VYAAYGGVYVATALIWLRVVD), and 85–105 (LFDWVGAAVALVGMLIIVAGW).

It belongs to the UPF0060 family.

It localises to the cell inner membrane. This is UPF0060 membrane protein YE2027 from Yersinia enterocolitica serotype O:8 / biotype 1B (strain NCTC 13174 / 8081).